Reading from the N-terminus, the 213-residue chain is 3-demethoxyubiquinol 3-hydroxylase (213 aa).

Fe cation is bound by residues E62, E92, H95, E144, E176, and H179.

Belongs to the COQ7 family. Fe cation serves as cofactor.

The protein resides in the cell membrane. It carries out the reaction a 5-methoxy-2-methyl-3-(all-trans-polyprenyl)benzene-1,4-diol + AH2 + O2 = a 3-demethylubiquinol + A + H2O. Its pathway is cofactor biosynthesis; ubiquinone biosynthesis. Catalyzes the hydroxylation of 2-nonaprenyl-3-methyl-6-methoxy-1,4-benzoquinol during ubiquinone biosynthesis. In Legionella pneumophila (strain Corby), this protein is 3-demethoxyubiquinol 3-hydroxylase.